Consider the following 325-residue polypeptide: CRISPR-associated endonuclease Cas1 2 (325 aa).

The Mn(2+) site is built by Glu145, His212, and Asp225. A disordered region spans residues Glu283–Gly325. Acidic residues predominate over residues Asp315–Gly325.

This sequence belongs to the CRISPR-associated endonuclease Cas1 family. Homodimer, forms a heterotetramer with a Cas2 homodimer. The cofactor is Mg(2+). Mn(2+) is required as a cofactor.

Its function is as follows. CRISPR (clustered regularly interspaced short palindromic repeat), is an adaptive immune system that provides protection against mobile genetic elements (viruses, transposable elements and conjugative plasmids). CRISPR clusters contain spacers, sequences complementary to antecedent mobile elements, and target invading nucleic acids. CRISPR clusters are transcribed and processed into CRISPR RNA (crRNA). Acts as a dsDNA endonuclease. Involved in the integration of spacer DNA into the CRISPR cassette. The chain is CRISPR-associated endonuclease Cas1 2 from Thermus thermophilus (strain ATCC 27634 / DSM 579 / HB8).